Consider the following 277-residue polypeptide: Proteasome subunit beta type-7 (277 aa).

Positions 1–43 (MAAVSVYAPPVGGFSFDNCRRNAVLEADFAKRGYKLPKVRKTG) are cleaved as a propeptide — removed in mature form. Residue threonine 44 is the Nucleophile of the active site.

Belongs to the peptidase T1B family. The 26S proteasome consists of a 20S proteasome core and two 19S regulatory subunits. The 20S proteasome core is a barrel-shaped complex made of 28 subunits that are arranged in four stacked rings. The two outer rings are each formed by seven alpha subunits, and the two inner rings are formed by seven beta subunits. The proteolytic activity is exerted by three beta-subunits PSMB5, PSMB6 and PSMB7. In terms of assembly, (Microbial infection) Interacts with HIV-1 Tat protein. In terms of tissue distribution, expressed at a low level in colonic mucosa. Up-regulated in colorectal cancer tissues.

Its subcellular location is the cytoplasm. The protein localises to the nucleus. The enzyme catalyses Cleavage of peptide bonds with very broad specificity.. Component of the 20S core proteasome complex involved in the proteolytic degradation of most intracellular proteins. This complex plays numerous essential roles within the cell by associating with different regulatory particles. Associated with two 19S regulatory particles, forms the 26S proteasome and thus participates in the ATP-dependent degradation of ubiquitinated proteins. The 26S proteasome plays a key role in the maintenance of protein homeostasis by removing misfolded or damaged proteins that could impair cellular functions, and by removing proteins whose functions are no longer required. Associated with the PA200 or PA28, the 20S proteasome mediates ubiquitin-independent protein degradation. This type of proteolysis is required in several pathways including spermatogenesis (20S-PA200 complex) or generation of a subset of MHC class I-presented antigenic peptides (20S-PA28 complex). Within the 20S core complex, PSMB7 displays a trypsin-like activity. The protein is Proteasome subunit beta type-7 of Homo sapiens (Human).